Here is a 142-residue protein sequence, read N- to C-terminus: Nucleoside diphosphate kinase (142 aa).

ATP-binding residues include K11, F59, R87, T93, R104, and N114. The Pros-phosphohistidine intermediate role is filled by H117.

This sequence belongs to the NDK family. In terms of assembly, homotetramer. The cofactor is Mg(2+).

The protein resides in the cytoplasm. The enzyme catalyses a 2'-deoxyribonucleoside 5'-diphosphate + ATP = a 2'-deoxyribonucleoside 5'-triphosphate + ADP. It carries out the reaction a ribonucleoside 5'-diphosphate + ATP = a ribonucleoside 5'-triphosphate + ADP. Its function is as follows. Major role in the synthesis of nucleoside triphosphates other than ATP. The ATP gamma phosphate is transferred to the NDP beta phosphate via a ping-pong mechanism, using a phosphorylated active-site intermediate. The sequence is that of Nucleoside diphosphate kinase from Yersinia pestis bv. Antiqua (strain Antiqua).